We begin with the raw amino-acid sequence, 881 residues long: Nitrate reductase [NADH] 1 (881 aa).

A disordered region spans residues 1-46; it reads MAASVEHRPFTSHQHGVVRSFKSYPDVPRPKKLPLPQPLSDSTNDN. Cys167 serves as a coordination point for Mo-molybdopterin. One can recognise a Cytochrome b5 heme-binding domain in the interval 515–590; it reads TKSYSLSEVR…LEDYRIGELM (76 aa). Heme contacts are provided by His550 and His573. Residues 625 to 737 form the FAD-binding FR-type domain; it reads REKIPCKLLS…KGPLGHIEYT (113 aa). FAD is bound by residues 677–680, 694–698, Phe699, Phe706, 711–713, and Thr764; these read RAYT, VVKVY, and IMS.

This sequence belongs to the nitrate reductase family. Homodimer. It depends on FAD as a cofactor. Heme is required as a cofactor. Requires Mo-molybdopterin as cofactor.

It carries out the reaction nitrite + NAD(+) + H2O = nitrate + NADH + H(+). In terms of biological role, nitrate reductase is a key enzyme involved in the first step of nitrate assimilation in plants, fungi and bacteria. The protein is Nitrate reductase [NADH] 1 (NIA1) of Phaseolus vulgaris (Kidney bean).